The chain runs to 456 residues: Probable transcription factor At3g04930 (456 aa).

Residues 1 to 71 form a disordered region; that stretch reads MTSDHRDALF…LNSPSTSSLP (71 aa). Composition is skewed to acidic residues over residues 15–38 and 50–62; these read ESPD…DLRD and AEAE…EEDL. Phosphoserine is present on Ser16.

It belongs to the GeBP family.

This chain is Probable transcription factor At3g04930, found in Arabidopsis thaliana (Mouse-ear cress).